Reading from the N-terminus, the 404-residue chain is CCA-adding enzyme (404 aa).

Positions 27 and 30 each coordinate ATP. CTP-binding residues include glycine 27 and arginine 30. Aspartate 40 and aspartate 42 together coordinate Mg(2+). ATP is bound by residues arginine 111, aspartate 154, arginine 157, arginine 160, and arginine 163. Arginine 111, aspartate 154, arginine 157, arginine 160, and arginine 163 together coordinate CTP.

Belongs to the tRNA nucleotidyltransferase/poly(A) polymerase family. Bacterial CCA-adding enzyme type 3 subfamily. In terms of assembly, homodimer. Requires Mg(2+) as cofactor.

It carries out the reaction a tRNA precursor + 2 CTP + ATP = a tRNA with a 3' CCA end + 3 diphosphate. The catalysed reaction is a tRNA with a 3' CCA end + 2 CTP + ATP = a tRNA with a 3' CCACCA end + 3 diphosphate. In terms of biological role, catalyzes the addition and repair of the essential 3'-terminal CCA sequence in tRNAs without using a nucleic acid template. Adds these three nucleotides in the order of C, C, and A to the tRNA nucleotide-73, using CTP and ATP as substrates and producing inorganic pyrophosphate. tRNA 3'-terminal CCA addition is required both for tRNA processing and repair. Also involved in tRNA surveillance by mediating tandem CCA addition to generate a CCACCA at the 3' terminus of unstable tRNAs. While stable tRNAs receive only 3'-terminal CCA, unstable tRNAs are marked with CCACCA and rapidly degraded. The polypeptide is CCA-adding enzyme (Geobacillus kaustophilus (strain HTA426)).